A 157-amino-acid chain; its full sequence is Protein Smg homolog (157 aa).

The protein belongs to the Smg family.

The polypeptide is Protein Smg homolog (Idiomarina loihiensis (strain ATCC BAA-735 / DSM 15497 / L2-TR)).